Consider the following 344-residue polypeptide: MSNAITMGIFWHLIGAASAACFYAPFKKVKKWSWETMWSVGGIVSWIILPWTISALLLPDFWAYYSSFSLSTLLPVFLFGAMWGIGNINYGLTMRYLGMSMGIGIAIGITLIVGTLMTPIINGNFDVLINTEGGRMTLLGVLVALIGVGIVTRAGQLKERKMGIKAEEFNLKKGLVLAVMCGIFSAGMSFAMNAAKPMHEAAAALGVDPLYVALPSYVVIMGGGAIINLGFCFIRLAKVKDLSLKADFSLAKPLIIHNVLLSALGGLMWYLQFFFYAWGHARIPAQYDYISWMLHMSFYVLCGGIVGLVLKEWNNTGRRPVTVLSLGCVVIIVAANIVGIGMAN.

10 helical membrane-spanning segments follow: residues 4 to 24 (AITM…CFYA), 38 to 58 (WSVG…ALLL), 68 to 88 (FSLS…IGNI), 101 to 121 (MGIG…TPII), 137 to 157 (TLLG…AGQL), 175 to 195 (LVLA…MNAA), 214 to 234 (LPSY…FCFI), 259 to 279 (VLLS…YAWG), 290 to 310 (ISWM…GLVL), and 323 to 343 (VLSL…IGMA).

The protein belongs to the L-rhamnose transporter (TC 2.A.7.6) family.

It is found in the cell inner membrane. The enzyme catalyses L-rhamnopyranose(in) + H(+)(in) = L-rhamnopyranose(out) + H(+)(out). Its function is as follows. Uptake of L-rhamnose across the cytoplasmic membrane with the concomitant transport of protons into the cell (symport system). In Shigella sonnei (strain Ss046), this protein is L-rhamnose-proton symporter.